The primary structure comprises 267 residues: tRNA pseudouridine synthase A (267 aa).

Aspartate 53 acts as the Nucleophile in catalysis. A substrate-binding site is contributed by tyrosine 114.

The protein belongs to the tRNA pseudouridine synthase TruA family. In terms of assembly, homodimer.

The enzyme catalyses uridine(38/39/40) in tRNA = pseudouridine(38/39/40) in tRNA. Formation of pseudouridine at positions 38, 39 and 40 in the anticodon stem and loop of transfer RNAs. This is tRNA pseudouridine synthase A from Chlamydia muridarum (strain MoPn / Nigg).